Consider the following 345-residue polypeptide: MSSIPVIELSSRAREIFQLVVESYLGSGLPVGSKTLARQGVNLSPASIRYVLQELETKGLLLSPHISAGRMPTELGLRLFVNGMMQLSEPSEEERSAIEADVIRGHSPKERLVNATTTLSGLSACAGLVLVPKQELVLKQLGFVVLDDNRALAIIVGSDGSVENRVIELSSGFPASALTEASNYINAHFSGYSFSEAKKRLFSQIDLERSELDSAASDLIKRGLAVWSEDSRKRPVLIVRGQSHLLQDASEDLDRAKQLLEELEDKKEIAGLLEKVSESDAAQIFIGSENKLFSLSGSSVIASPYHGEDGHMVGVVAVIGPTRLNYGRIVPMVDFTAKTLSRIIA.

It belongs to the HrcA family.

In terms of biological role, negative regulator of class I heat shock genes (grpE-dnaK-dnaJ and groELS operons). Prevents heat-shock induction of these operons. The protein is Heat-inducible transcription repressor HrcA of Zymomonas mobilis subsp. mobilis (strain ATCC 31821 / ZM4 / CP4).